The following is a 188-amino-acid chain: Putative 3-methyladenine DNA glycosylase (188 aa).

This sequence belongs to the DNA glycosylase MPG family.

This is Putative 3-methyladenine DNA glycosylase from Ehrlichia ruminantium (strain Welgevonden).